The chain runs to 94 residues: C-C motif chemokine 17 (94 aa).

A signal peptide spans 1–23 (MAPLKMLALVTLLLGASLQHIHA). 2 disulfide bridges follow: C33/C57 and C34/C73.

Belongs to the intercrine beta (chemokine CC) family. In terms of tissue distribution, constitutively expressed in thymus. Detected at lower levels in the lung, colon and small intestine. Expressed in stimulated peripheral blood mononuclear cells, but not in resting cells.

It localises to the secreted. Its function is as follows. Chemokine, which displays chemotactic activity for T lymphocytes, preferentially Th2 cells, but not monocytes or granulocytes. Therefore plays an important role in a wide range of inflammatory and immunological processes. Acts by binding to CCR4 at T-cell surface. Mediates GM-CSF/CSF2-driven pain and inflammation. In the brain, required to maintain the typical, highly branched morphology of hippocampal microglia under homeostatic conditions. May be important for the appropriate adaptation of microglial morphology and synaptic plasticity to acute lipopolysaccharide (LPS)-induced neuroinflammation. Plays a role in wound healing, mainly by inducing fibroblast migration into the wound. The polypeptide is C-C motif chemokine 17 (CCL17) (Homo sapiens (Human)).